We begin with the raw amino-acid sequence, 503 residues long: Glutamate--tRNA ligase (503 aa).

Residues P26–L36 carry the 'HIGH' region motif. Residues T126–A148 are disordered. Positions V130–A148 are enriched in basic and acidic residues. Positions K270–R274 match the 'KMSKS' region motif. K273 contributes to the ATP binding site.

The protein belongs to the class-I aminoacyl-tRNA synthetase family. Glutamate--tRNA ligase type 1 subfamily. Monomer.

It localises to the cytoplasm. It carries out the reaction tRNA(Glu) + L-glutamate + ATP = L-glutamyl-tRNA(Glu) + AMP + diphosphate. In terms of biological role, catalyzes the attachment of glutamate to tRNA(Glu) in a two-step reaction: glutamate is first activated by ATP to form Glu-AMP and then transferred to the acceptor end of tRNA(Glu). The chain is Glutamate--tRNA ligase from Saccharopolyspora erythraea (strain ATCC 11635 / DSM 40517 / JCM 4748 / NBRC 13426 / NCIMB 8594 / NRRL 2338).